A 436-amino-acid chain; its full sequence is Regulatory protein E2 (436 aa).

Residues 1-201 form a transactivation domain region; sequence MEKLSERFSA…DTVFTPVTSS (201 aa). A compositionally biased stretch (low complexity) spans 195-209; it reads FTPVTSSTPPVGVAS. The tract at residues 195-328 is disordered; it reads FTPVTSSTPP…DGGGVAPDEV (134 aa). Polar residues predominate over residues 210-230; the sequence is QNSAPEPASTSDSPQRSSQVT. Over residues 284 to 293 the composition is skewed to basic and acidic residues; the sequence is LSRESAESPR. Positions 352–436 are DNA-binding domain; it reads DPPVILLRGA…EWSYGQFDDL (85 aa).

This sequence belongs to the papillomaviridae E2 protein family. In terms of assembly, binds DNA as homodimer. Interacts with protein E1; this interaction greatly increases E1 DNA-binding activity. Interacts with protein L1; this interaction enhances E2-dependent replication and transcription activation. Interacts with protein L2; this interaction inhibits E2 transcriptional activity but not DNA replication function E2. Interacts with protein E7; this interaction inhibits E7 oncogenic activity. Interacts with host TAF1; this interaction modulates E2-dependent transcriptional regulation. Interacts with host BRD4; this interaction mediates E2 transcriptional activation function. Additionally, the interaction with host BRD4 on mitotic chromosomes mediates tethering of the viral genome. Interacts with host TOPBP1; this interaction is required for optimal viral DNA replication. Phosphorylated.

It is found in the host nucleus. In terms of biological role, plays a role in the initiation of viral DNA replication. A dimer of E2 interacts with a dimer of E1 in order to improve specificity of E1 DNA binding activity. Once the complex recognizes and binds DNA at specific sites, the E2 dimer is removed from DNA. E2 also regulates viral transcription through binding to the E2RE response element (5'-ACCNNNNNNGGT-3') present in multiple copies in the regulatory regions of the viral genome. Activates or represses transcription depending on E2RE's position with regards to proximal promoter elements including the TATA-box. Repression occurs by sterically hindering the assembly of the transcription initiation complex. The polypeptide is Regulatory protein E2 (Human papillomavirus 22).